The primary structure comprises 706 residues: 1,4-alpha-glucan-branching enzyme (706 aa).

(1,4-alpha-D-glucosyl)n contacts are provided by Trp-96 and Lys-133. The Nucleophile role is filled by Asp-358. Glu-419 (proton donor) is an active-site residue.

Belongs to the glycosyl hydrolase 13 family. GlgB subfamily. In terms of assembly, monomer.

It localises to the cytoplasm. It carries out the reaction Transfers a segment of a (1-&gt;4)-alpha-D-glucan chain to a primary hydroxy group in a similar glucan chain.. It functions in the pathway glycan biosynthesis; glycogen biosynthesis. Functionally, glycogen-branching enzyme participates in the glycogen biosynthetic process along with glycogenin and glycogen synthase. Generates alpha-1,6-glucosidic branches from alpha-1,4-linked glucose chains, to increase solubility of the glycogen polymer. This is 1,4-alpha-glucan-branching enzyme (GLC3) from Candida glabrata (strain ATCC 2001 / BCRC 20586 / JCM 3761 / NBRC 0622 / NRRL Y-65 / CBS 138) (Yeast).